The following is a 281-amino-acid chain: Small ribosomal subunit protein uS3 (281 aa).

The region spanning 38–106 (IRRLLSTGLE…QVQLNILEVK (69 aa)) is the KH type-2 domain. The tract at residues 218 to 281 (APAGAERARR…VTHEPQIAES (64 aa)) is disordered. The segment covering 238–256 (SGAAGTTVTGTDAGRAVGG) has biased composition (low complexity).

Belongs to the universal ribosomal protein uS3 family. Part of the 30S ribosomal subunit. Forms a tight complex with proteins S10 and S14.

Functionally, binds the lower part of the 30S subunit head. Binds mRNA in the 70S ribosome, positioning it for translation. This Mycobacterium leprae (strain Br4923) protein is Small ribosomal subunit protein uS3.